Here is a 216-residue protein sequence, read N- to C-terminus: Adenylate kinase (216 aa).

An ATP-binding site is contributed by 11–16 (GSGKGT). The interval 31–60 (ATGDLFRKAIECGDELGDTVKSYMERGELV) is NMP. Residues Thr32, Arg37, 58-60 (ELV), 86-89 (GFPR), and Gln93 contribute to the AMP site. The interval 127–163 (GRWVCRSCQSPYQSGCAEVTKGKCSRCQGGLYQRPDD) is LID. ATP is bound at residue Arg128. Zn(2+)-binding residues include Cys131, Cys134, Cys150, and Cys153. Arg160 and Arg171 together coordinate AMP. ATP is bound at residue Ala199.

The protein belongs to the adenylate kinase family. As to quaternary structure, monomer.

It is found in the cytoplasm. The enzyme catalyses AMP + ATP = 2 ADP. The protein operates within purine metabolism; AMP biosynthesis via salvage pathway; AMP from ADP: step 1/1. In terms of biological role, catalyzes the reversible transfer of the terminal phosphate group between ATP and AMP. Plays an important role in cellular energy homeostasis and in adenine nucleotide metabolism. This chain is Adenylate kinase, found in Dehalococcoides mccartyi (strain CBDB1).